A 176-amino-acid polypeptide reads, in one-letter code: Ribosome maturation factor RimM (176 aa).

The PRC barrel domain occupies 103 to 176 (QNDEYYFYEI…KIVVKELEWI (74 aa)).

This sequence belongs to the RimM family. In terms of assembly, binds ribosomal protein uS19.

Its subcellular location is the cytoplasm. Its function is as follows. An accessory protein needed during the final step in the assembly of 30S ribosomal subunit, possibly for assembly of the head region. Essential for efficient processing of 16S rRNA. May be needed both before and after RbfA during the maturation of 16S rRNA. It has affinity for free ribosomal 30S subunits but not for 70S ribosomes. The sequence is that of Ribosome maturation factor RimM from Thermotoga neapolitana (strain ATCC 49049 / DSM 4359 / NBRC 107923 / NS-E).